We begin with the raw amino-acid sequence, 76 residues long: Small nuclear ribonucleoprotein G (76 aa).

The Sm domain maps to 4–76; that stretch reads AHPPELKKFM…IIMLEALERV (73 aa).

This sequence belongs to the snRNP Sm proteins family. As to quaternary structure, core component of the spliceosomal U1, U2, U4 and U5 small nuclear ribonucleoproteins (snRNPs), the building blocks of the spliceosome. Most spliceosomal snRNPs contain a common set of Sm proteins, SNRPB, SNRPD1, SNRPD2, SNRPD3, SNRPE, SNRPF and SNRPG that assemble in a heptameric protein ring on the Sm site of the small nuclear RNA to form the core snRNP. Component of the U1 snRNP. The U1 snRNP is composed of the U1 snRNA and the 7 core Sm proteins SNRPB, SNRPD1, SNRPD2, SNRPD3, SNRPE, SNRPF and SNRPG, and at least three U1 snRNP-specific proteins SNRNP70/U1-70K, SNRPA/U1-A and SNRPC/U1-C. Component of the U4/U6-U5 tri-snRNP complex composed of the U4, U6 and U5 snRNAs and at least PRPF3, PRPF4, PRPF6, PRPF8, PRPF31, SNRNP200, TXNL4A, SNRNP40, SNRPB, SNRPD1, SNRPD2, SNRPD3, SNRPE, SNRPF, SNRPG, DDX23, CD2BP2, PPIH, SNU13, EFTUD2, SART1 and USP39, plus LSM2, LSM3, LSM4, LSM5, LSM6, LSM7 and LSM8. Component of the U7 snRNP complex, or U7 Sm protein core complex, that is composed of the U7 snRNA and at least LSM10, LSM11, SNRPB, SNRPD3, SNRPE, SNRPF and SNRPG; the complex does not contain SNRPD1 and SNRPD2. Component of the minor spliceosome, which splices U12-type introns. Part of the SMN-Sm complex that contains SMN1, GEMIN2/SIP1, DDX20/GEMIN3, GEMIN4, GEMIN5, GEMIN6, GEMIN7, GEMIN8, STRAP/UNRIP and the Sm proteins SNRPB, SNRPD1, SNRPD2, SNRPD3, SNRPE, SNRPF and SNRPG; catalyzes core snRNPs assembly. Forms a 6S pICln-Sm complex composed of CLNS1A/pICln, SNRPD1, SNRPD2, SNRPE, SNRPF and SNRPG; ring-like structure where CLNS1A/pICln mimics additional Sm proteins and which is unable to assemble into the core snRNP. Interacts with GEMIN2 (via N-terminus); the interaction is direct. Interacts with SNRPE; the interaction is direct.

The protein resides in the cytoplasm. It is found in the cytosol. Its subcellular location is the nucleus. In terms of biological role, plays a role in pre-mRNA splicing as a core component of the spliceosomal U1, U2, U4 and U5 small nuclear ribonucleoproteins (snRNPs), the building blocks of the spliceosome. Component of both the pre-catalytic spliceosome B complex and activated spliceosome C complexes. As a component of the minor spliceosome, involved in the splicing of U12-type introns in pre-mRNAs. As part of the U7 snRNP it is involved in histone 3'-end processing. This Bos taurus (Bovine) protein is Small nuclear ribonucleoprotein G (SNRPG).